The sequence spans 149 residues: UPF0179 protein TON_1048 (149 aa).

It belongs to the UPF0179 family.

This chain is UPF0179 protein TON_1048, found in Thermococcus onnurineus (strain NA1).